Here is a 311-residue protein sequence, read N- to C-terminus: Endosome-associated-trafficking regulator 1 (311 aa).

Positions 167–278 (RGNAENGTKN…KSENERLRLG (112 aa)) form a coiled coil.

It belongs to the ENTR1 family.

Its subcellular location is the cytoplasm. It is found in the early endosome. The protein localises to the endosome. It localises to the recycling endosome. The protein resides in the midbody. Its subcellular location is the cytoskeleton. It is found in the microtubule organizing center. The protein localises to the centrosome. It localises to the cilium basal body. Functionally, endosome-associated protein that plays a role in membrane receptor sorting, cytokinesis and ciliogenesis. In Danio rerio (Zebrafish), this protein is Endosome-associated-trafficking regulator 1.